The chain runs to 38 residues: Photosystem II reaction center protein M (38 aa).

A helical transmembrane segment spans residues 7–27 (GFVASILFVLVPTVFLLILYI).

Belongs to the PsbM family. In terms of assembly, PSII is composed of 1 copy each of membrane proteins PsbA, PsbB, PsbC, PsbD, PsbE, PsbF, PsbH, PsbI, PsbJ, PsbK, PsbL, PsbM, PsbT, PsbX, PsbY, PsbZ, Psb30/Ycf12, peripheral proteins PsbO, CyanoQ (PsbQ), PsbU, PsbV and a large number of cofactors. It forms dimeric complexes.

Its subcellular location is the cellular thylakoid membrane. Its function is as follows. One of the components of the core complex of photosystem II (PSII). PSII is a light-driven water:plastoquinone oxidoreductase that uses light energy to abstract electrons from H(2)O, generating O(2) and a proton gradient subsequently used for ATP formation. It consists of a core antenna complex that captures photons, and an electron transfer chain that converts photonic excitation into a charge separation. This subunit is found at the monomer-monomer interface. This Nostoc punctiforme (strain ATCC 29133 / PCC 73102) protein is Photosystem II reaction center protein M.